We begin with the raw amino-acid sequence, 83 residues long: Small ribosomal subunit protein uS17 (83 aa).

Belongs to the universal ribosomal protein uS17 family. Part of the 30S ribosomal subunit.

In terms of biological role, one of the primary rRNA binding proteins, it binds specifically to the 5'-end of 16S ribosomal RNA. The chain is Small ribosomal subunit protein uS17 from Gloeobacter violaceus (strain ATCC 29082 / PCC 7421).